Reading from the N-terminus, the 96-residue chain is Putative pterin-4-alpha-carbinolamine dehydratase (96 aa).

This sequence belongs to the pterin-4-alpha-carbinolamine dehydratase family.

The catalysed reaction is (4aS,6R)-4a-hydroxy-L-erythro-5,6,7,8-tetrahydrobiopterin = (6R)-L-erythro-6,7-dihydrobiopterin + H2O. In Rhodospirillum rubrum (strain ATCC 11170 / ATH 1.1.1 / DSM 467 / LMG 4362 / NCIMB 8255 / S1), this protein is Putative pterin-4-alpha-carbinolamine dehydratase.